Reading from the N-terminus, the 254-residue chain is 5'/3'-nucleotidase SurE (254 aa).

The a divalent metal cation site is built by aspartate 8, aspartate 9, serine 39, and asparagine 92.

Belongs to the SurE nucleotidase family. It depends on a divalent metal cation as a cofactor.

The protein resides in the cytoplasm. It carries out the reaction a ribonucleoside 5'-phosphate + H2O = a ribonucleoside + phosphate. It catalyses the reaction a ribonucleoside 3'-phosphate + H2O = a ribonucleoside + phosphate. The catalysed reaction is [phosphate](n) + H2O = [phosphate](n-1) + phosphate + H(+). Functionally, nucleotidase with a broad substrate specificity as it can dephosphorylate various ribo- and deoxyribonucleoside 5'-monophosphates and ribonucleoside 3'-monophosphates with highest affinity to 3'-AMP. Also hydrolyzes polyphosphate (exopolyphosphatase activity) with the preference for short-chain-length substrates (P20-25). Might be involved in the regulation of dNTP and NTP pools, and in the turnover of 3'-mononucleotides produced by numerous intracellular RNases (T1, T2, and F) during the degradation of various RNAs. The chain is 5'/3'-nucleotidase SurE from Edwardsiella ictaluri (strain 93-146).